The chain runs to 227 residues: Aspartyl protease inhibitor (227 aa).

The first 15 residues, 1 to 15 (MKLVVLCVLCGIALA), serve as a signal peptide directing secretion. Residues 88 to 109 (SLKSRMAGKKEKAVTPKEEDLP) show a composition bias toward basic and acidic residues. Residues 88 to 116 (SLKSRMAGKKEKAVTPKEEDLPKAPQKPS) are disordered. Cysteine 131 and cysteine 223 are oxidised to a cystine.

It belongs to the protease inhibitor I33 family.

The protein localises to the secreted. In terms of biological role, aspartyl protease inhibitor. This Ostertagia ostertagi (Brown stomach worm) protein is Aspartyl protease inhibitor (API).